The sequence spans 308 residues: Cyclin-D4-1 (308 aa).

The protein belongs to the cyclin family. Cyclin D subfamily. In terms of assembly, interacts with CDKA-1, CDKB2-1, KRP4/ICK7, KRP5/ICK3, KRP6/ICK4 and KRP7/ICK5. In terms of tissue distribution, expressed in shoot apical meristem, leaf primordia vascular tissues and tapetum of anthers.

Its function is as follows. May activate cell cycle in the root apical meristem (RAM) and promote embryonic root (radicle) protrusion. The polypeptide is Cyclin-D4-1 (CYCD4-1) (Arabidopsis thaliana (Mouse-ear cress)).